Consider the following 365-residue polypeptide: Fructose-1,6-bisphosphatase class 1 2 (365 aa).

4 residues coordinate Mg(2+): E100, D122, L124, and D125. Substrate is bound by residues 125-128 (DGSS) and N221. E293 is a binding site for Mg(2+).

Belongs to the FBPase class 1 family. Homotetramer. It depends on Mg(2+) as a cofactor.

Its subcellular location is the cytoplasm. It carries out the reaction beta-D-fructose 1,6-bisphosphate + H2O = beta-D-fructose 6-phosphate + phosphate. It functions in the pathway carbohydrate biosynthesis; gluconeogenesis. The protein is Fructose-1,6-bisphosphatase class 1 2 of Leptothrix cholodnii (strain ATCC 51168 / LMG 8142 / SP-6) (Leptothrix discophora (strain SP-6)).